We begin with the raw amino-acid sequence, 379 residues long: Cytochrome b (379 aa).

4 helical membrane-spanning segments follow: residues 33–53 (FGSL…FLAM), 77–98 (WMIR…FIHV), 113–133 (WNVG…GYVL), and 178–198 (FFAL…IHLL). Heme b is bound by residues His-83 and His-97. 2 residues coordinate heme b: His-182 and His-196. His-201 serves as a coordination point for a ubiquinone. The next 4 helical transmembrane spans lie at 226–246 (TKDF…ALFY), 288–308 (LGGV…PFLQ), 320–340 (LSQF…WIGG), and 347–367 (FISI…FIMP).

Belongs to the cytochrome b family. As to quaternary structure, the cytochrome bc1 complex contains 11 subunits: 3 respiratory subunits (MT-CYB, CYC1 and UQCRFS1), 2 core proteins (UQCRC1 and UQCRC2) and 6 low-molecular weight proteins (UQCRH/QCR6, UQCRB/QCR7, UQCRQ/QCR8, UQCR10/QCR9, UQCR11/QCR10 and a cleavage product of UQCRFS1). This cytochrome bc1 complex then forms a dimer. Requires heme b as cofactor.

Its subcellular location is the mitochondrion inner membrane. Functionally, component of the ubiquinol-cytochrome c reductase complex (complex III or cytochrome b-c1 complex) that is part of the mitochondrial respiratory chain. The b-c1 complex mediates electron transfer from ubiquinol to cytochrome c. Contributes to the generation of a proton gradient across the mitochondrial membrane that is then used for ATP synthesis. The polypeptide is Cytochrome b (MT-CYB) (Lepilemur septentrionalis (Northern sportive lemur)).